Reading from the N-terminus, the 196-residue chain is Small ribosomal subunit protein uS4c (196 aa).

The disordered stretch occupies residues 17 to 36 (ALPGLTRKTPKSGSNLKKKF). An S4 RNA-binding domain is found at 89–150 (MRLDNILFRL…NQRSKRLIQN (62 aa)).

Belongs to the universal ribosomal protein uS4 family. In terms of assembly, part of the 30S ribosomal subunit. Contacts protein S5. The interaction surface between S4 and S5 is involved in control of translational fidelity.

Its subcellular location is the plastid. The protein localises to the chloroplast. One of the primary rRNA binding proteins, it binds directly to 16S rRNA where it nucleates assembly of the body of the 30S subunit. Its function is as follows. With S5 and S12 plays an important role in translational accuracy. The polypeptide is Small ribosomal subunit protein uS4c (rps4) (Phyllostachys flexuosa (Drooping timber bamboo)).